Here is a 215-residue protein sequence, read N- to C-terminus: Urease accessory protein UreG 2 (215 aa).

Residue 11–18 participates in GTP binding; the sequence is GPVGSGKT.

The protein belongs to the SIMIBI class G3E GTPase family. UreG subfamily. As to quaternary structure, homodimer. UreD, UreF and UreG form a complex that acts as a GTP-hydrolysis-dependent molecular chaperone, activating the urease apoprotein by helping to assemble the nickel containing metallocenter of UreC. The UreE protein probably delivers the nickel.

The protein resides in the cytoplasm. Facilitates the functional incorporation of the urease nickel metallocenter. This process requires GTP hydrolysis, probably effectuated by UreG. This Methylorubrum extorquens (strain PA1) (Methylobacterium extorquens) protein is Urease accessory protein UreG 2.